A 176-amino-acid polypeptide reads, in one-letter code: Thiol:disulfide interchange protein HelX (176 aa).

Residues 1–19 (MAKPLMFLPLLVMAGFVGA) form the signal peptide. In terms of domain architecture, Thioredoxin spans 35 to 172 (ALAGKEAPAV…ITKKIDPLLA (138 aa)). A disulfide bridge links C75 with C78.

The protein belongs to the thioredoxin family. DsbE subfamily.

Its subcellular location is the periplasm. Its function is as follows. Required for disulfide bond formation in some periplasmic proteins. Also acts as a disulfide oxidoreductase in cytochromes c biogenesis. The cysteines of apocytochromes c must be in the reduced state for covalent linkage between the two moieties to occur. This Rhodobacter capsulatus (strain ATCC BAA-309 / NBRC 16581 / SB1003) protein is Thiol:disulfide interchange protein HelX (helX).